The following is a 760-amino-acid chain: Transglutaminase-activating metalloprotease (760 aa).

The signal sequence occupies residues 1–33; the sequence is MRPTPQRRAVATGALVAVTAMLAVGVQTTSANA. Disordered regions lie at residues 32-59 and 228-265; these read NAGQDKAAHPAPRQSIHKPDPGAEPVKL and KQGTGNSQHSGQVQIGTTKSGSSYQMNDTTRGGHKTYN. Positions 34-229 are excised as a propeptide; that stretch reads GQDKAAHPAP…KLFEFQGVKQ (196 aa). Residues 228–257 show a composition bias toward polar residues; sequence KQGTGNSQHSGQVQIGTTKSGSSYQMNDTT. H366 is a Zn(2+) binding site. The active site involves E367. Zn(2+) contacts are provided by H370 and E390. The active-site Proton donor is H454. The 121-residue stretch at 640 to 760 folds into the P/Homo B domain; it reads TVNTTGGGSV…GTIDKWRLTF (121 aa).

The protein belongs to the peptidase M4 family. The cofactor is Zn(2+).

It is found in the secreted. Functionally, cleaves the N-terminal propeptide of transglutaminase thus activating it. This chain is Transglutaminase-activating metalloprotease, found in Streptomyces mobaraensis (Streptoverticillium mobaraense).